The sequence spans 338 residues: Lipoate-protein ligase A (338 aa).

Residues 29-216 (PATQRVLFLW…AFFAHYGEHV (188 aa)) enclose the BPL/LPL catalytic domain. ATP is bound by residues Arg-71, 76-79 (GAVF), and Lys-134. Lys-134 contacts (R)-lipoate.

The protein belongs to the LplA family. Monomer.

It localises to the cytoplasm. It carries out the reaction L-lysyl-[lipoyl-carrier protein] + (R)-lipoate + ATP = N(6)-[(R)-lipoyl]-L-lysyl-[lipoyl-carrier protein] + AMP + diphosphate + H(+). Its pathway is protein modification; protein lipoylation via exogenous pathway; protein N(6)-(lipoyl)lysine from lipoate: step 1/2. It functions in the pathway protein modification; protein lipoylation via exogenous pathway; protein N(6)-(lipoyl)lysine from lipoate: step 2/2. Its function is as follows. Catalyzes both the ATP-dependent activation of exogenously supplied lipoate to lipoyl-AMP and the transfer of the activated lipoyl onto the lipoyl domains of lipoate-dependent enzymes. The protein is Lipoate-protein ligase A of Escherichia coli O17:K52:H18 (strain UMN026 / ExPEC).